A 409-amino-acid polypeptide reads, in one-letter code: Glycogenin (409 aa).

Residues Leu8, Tyr14, and Arg80 each coordinate UDP. Residues Leu8, Tyr14, Arg80, Lys89, Asp105, Asp107, Asn140, Ser141, Asp169, Asp172, and Gln173 each contribute to the UDP-alpha-D-glucose site. Asp105 and Asp107 together coordinate UDP. Residues Asp105 and Asp107 each contribute to the Mn(2+) site. The O-linked (Glc...) tyrosine glycan is linked to Tyr212. The UDP site is built by His229, Gly232, and Lys235. Position 229 (His229) interacts with Mn(2+). UDP-alpha-D-glucose contacts are provided by Gly232 and Lys235. Positions 283–303 (RIEEDSHETEEKVDEEVSISE) are disordered.

It belongs to the glycosyltransferase 8 family. Glycogenin subfamily. The cofactor is Mn(2+).

The protein resides in the cytoplasm. The protein localises to the vacuole. It catalyses the reaction L-tyrosyl-[glycogenin] + UDP-alpha-D-glucose = alpha-D-glucosyl-L-tyrosyl-[glycogenin] + UDP + H(+). The enzyme catalyses [1,4-alpha-D-glucosyl](n)-L-tyrosyl-[glycogenin] + UDP-alpha-D-glucose = [1,4-alpha-D-glucosyl](n+1)-L-tyrosyl-[glycogenin] + UDP + H(+). In terms of biological role, glycogenin participates in the glycogen biosynthetic process along with glycogen synthase and glycogen branching enzyme. It catalyzes the formation of a short alpha (1,4)-glucosyl chain covalently attached via a glucose 1-O-tyrosyl linkage to internal tyrosine residues and these chains act as primers for the elongation reaction catalyzed by glycogen synthase. This Komagataella phaffii (strain GS115 / ATCC 20864) (Yeast) protein is Glycogenin.